Reading from the N-terminus, the 333-residue chain is Probable endo-beta-1,4-glucanase B (333 aa).

An N-terminal signal peptide occupies residues 1 to 17 (MKFRNLFFAAVAGSAVA). N37 and N100 each carry an N-linked (GlcNAc...) asparagine glycan. The active-site Proton donor is E160. E267 (nucleophile) is an active-site residue.

This sequence belongs to the glycosyl hydrolase 5 (cellulase A) family.

It is found in the secreted. The enzyme catalyses Endohydrolysis of (1-&gt;4)-beta-D-glucosidic linkages in cellulose, lichenin and cereal beta-D-glucans.. Has endoglucanase activity on substrates containing beta-1,4 glycosidic bonds, like in carboxymethylcellulose (CMC), hydroxyethylcellulose (HEC) and beta-glucan. Involved in the degradation of complex natural cellulosic substrates. The chain is Probable endo-beta-1,4-glucanase B (eglB) from Aspergillus oryzae (strain ATCC 42149 / RIB 40) (Yellow koji mold).